Consider the following 130-residue polypeptide: Small ribosomal subunit protein uS8 (130 aa).

It belongs to the universal ribosomal protein uS8 family. As to quaternary structure, part of the 30S ribosomal subunit. Contacts proteins S5 and S12.

Functionally, one of the primary rRNA binding proteins, it binds directly to 16S rRNA central domain where it helps coordinate assembly of the platform of the 30S subunit. This Shewanella baltica (strain OS223) protein is Small ribosomal subunit protein uS8.